Here is a 790-residue protein sequence, read N- to C-terminus: Cadherin-6 (790 aa).

An N-terminal signal peptide occupies residues 1–18 (MRTYRYFLLLFWVGQPYP). Residues 19–53 (TFSTPLSKRTSGFPAKKRTLELSGNSKNELSRSKR) constitute a propeptide that is removed on maturation. 5 Cadherin domains span residues 54–159 (SWMW…EPIF), 160–268 (TKEV…PPRF), 269–383 (PQST…PPVF), 384–486 (SKLA…DNPP), and 487–608 (EFAE…LVHP). Residues 54-615 (SWMWNQFFLL…VHPTGLSTGA (562 aa)) are Extracellular-facing. N-linked (GlcNAc...) asparagine glycosylation occurs at N255. The segment at 261–291 (VNDNPPRFPQSTYQFKTPESSPPGTPIGRIK) is disordered. A compositionally biased stretch (polar residues) spans 269 to 279 (PQSTYQFKTPE). 4 N-linked (GlcNAc...) asparagine glycosylation sites follow: N399, N437, N455, and N536. Residues 616–636 (LIAILLCIVTLLVTVVLFAAL) traverse the membrane as a helical segment. Topologically, residues 637-790 (RRQRKKEPLI…YGGVDSDKDS (154 aa)) are cytoplasmic. 2 positions are modified to phosphoserine: S786 and S790.

It localises to the cell membrane. Functionally, cadherins are calcium-dependent cell adhesion proteins. They preferentially interact with themselves in a homophilic manner in connecting cells; cadherins may thus contribute to the sorting of heterogeneous cell types. This Bos taurus (Bovine) protein is Cadherin-6 (CDH6).